Reading from the N-terminus, the 207-residue chain is Outer-membrane lipoprotein LolB (207 aa).

The N-terminal stretch at methionine 1–alanine 21 is a signal peptide. Cysteine 22 carries the N-palmitoyl cysteine lipid modification. The S-diacylglycerol cysteine moiety is linked to residue cysteine 22.

Belongs to the LolB family. Monomer.

It localises to the cell outer membrane. In terms of biological role, plays a critical role in the incorporation of lipoproteins in the outer membrane after they are released by the LolA protein. This chain is Outer-membrane lipoprotein LolB, found in Escherichia coli O6:H1 (strain CFT073 / ATCC 700928 / UPEC).